Reading from the N-terminus, the 82-residue chain is uncharacterized protein (82 aa).

The segment covering 29–38 has biased composition (low complexity); that stretch reads TATKSTSSGS. The tract at residues 29-64 is disordered; sequence TATKSTSSGSVPSFFTESTSTPLNQSKTNTSTLNKS. Residues 39–50 are compositionally biased toward polar residues; the sequence is VPSFFTESTSTP. Over residues 51 to 64 the composition is skewed to low complexity; sequence LNQSKTNTSTLNKS.

This is an uncharacterized protein from Dictyostelium discoideum (Social amoeba).